The sequence spans 1905 residues: Bromodomain adjacent to zinc finger domain protein 2A (1905 aa).

Disordered regions lie at residues 1-59 and 362-434; these read MEME…NGLS and TSIF…PTTS. Polar residues-rich tracts occupy residues 35 to 59, 379 to 391, and 399 to 420; these read TNGS…NGLS, LQDN…NGSD, and TQSS…STIQ. Threonine 507 bears the Phosphothreonine mark. Serine 509 is modified (phosphoserine). Residues 546–617 form the MBD domain; that stretch reads IATPEEVRLP…EHFSFSPRMP (72 aa). Threonine 548 carries the phosphothreonine modification. Serine 613 carries the post-translational modification Phosphoserine. Positions 648–792 are disordered; that stretch reads ITGKRGRPRN…KEKEEVTKAK (145 aa). 2 DNA-binding regions (a.T hook) span residues 649-661 and 670-682; these read TGKR…TEKA and KRGR…VKIT. A compositionally biased stretch (basic and acidic residues) spans 656–668; that stretch reads RNTEKAKTKEVPK. Over residues 669–678 the composition is skewed to basic residues; sequence VKRGRGRPPK. Position 680 is an N6-acetyllysine; by KAT8 (lysine 680). The span at 686–709 shows a compositional bias: basic and acidic residues; that stretch reads NKTDNRPLKKLEAQETLNEEDKAK. The stretch at 693 to 792 forms a coiled coil; the sequence is LKKLEAQETL…KEKEEVTKAK (100 aa). The segment covering 710 to 721 has biased composition (basic residues); the sequence is IAKSKKKMRQKV. Residues 725–734 show a composition bias toward polar residues; the sequence is ECQTTIQGQA. 2 stretches are compositionally biased toward basic and acidic residues: residues 739–748 and 756–792; these read KQETKSLKQK and AEKE…TKAK. Lysine 799 is modified (N6-acetyllysine). One can recognise a DDT domain in the interval 848-913; that stretch reads SGAFSDCLTI…LKAALHDPGF (66 aa). Lysine 866 participates in a covalent cross-link: Glycyl lysine isopeptide (Lys-Gly) (interchain with G-Cter in SUMO2). Serine 1051 is modified (phosphoserine). Residues lysine 1150 and lysine 1172 each participate in a glycyl lysine isopeptide (Lys-Gly) (interchain with G-Cter in SUMO2) cross-link. Disordered regions lie at residues 1178–1220, 1283–1318, and 1330–1412; these read SNTT…PQAQ, LSSS…SSPD, and MPCN…RPPS. At serine 1184 the chain carries Phosphoserine. Positions 1186-1198 form a DNA-binding region, a.T hook 3; sequence ARARGRPRKTKPG. The span at 1283-1293 shows a compositional bias: low complexity; the sequence is LSSSVLTPDSS. Acidic residues predominate over residues 1306 to 1315; that stretch reads EEPEPDEAES. Residues 1345 to 1359 are compositionally biased toward polar residues; the sequence is DQPTPSPQQLASSKP. Position 1397 is a phosphoserine (serine 1397). The segment at residues 1404–1416 is a DNA-binding region (a.T hook 4); sequence PKRRGRPPSKFFK. Serine 1559 is modified (phosphoserine). Glycyl lysine isopeptide (Lys-Gly) (interchain with G-Cter in SUMO2) cross-links involve residues lysine 1676 and lysine 1709. Residues 1676–1726 form a PHD-type zinc finger; the sequence is KVTCLVCRKGDNDEFLLLCDGCDRGCHIYCHRPKMEAVPEGDWFCTVCLAQ. Disordered stretches follow at residues 1734-1755 and 1769-1789; these read QKPG…NFSE and ESPA…KRRR. A phosphoserine mark is found at serine 1747, serine 1770, serine 1783, and serine 1785. In terms of domain architecture, Bromo spans 1793–1897; the sequence is RNHHSDLTFC…RFFESRWEEF (105 aa).

It belongs to the WAL family. Component of the NoRC-1 ISWI chromatin remodeling complex at least composed of SMARCA1 and BAZ2A/TIP5, which regulates the spacing of histone octamers on the DNA template to facilitate access to DNA. Within the NoRC-1 ISWI chromatin remodeling complex interacts with SMARCA1; the interaction is direct. Component of the NoRC-5 ISWI chromatin remodeling complex (also called the NoRC nucleolar-remodeling complex), at least composed of SMARCA5/SNF2H and BAZ2A/TIP5, which regulates the spacing of histone octamers on the DNA template to facilitate access to DNA. Within the NoRC-5 ISWI chromatin remodeling complexes interacts with SMARCA5/SNF2H; the interaction is direct. Interacts with TTF1; the interaction is required for recruitment of the NoRC-5 ISWI chromatin remodeling complex to rDNA. Interacts with HDAC1. Interacts with SIN3A. Interacts with DNMT1 and DNM3B. Interacts with BEND3 and USP21. Post-translationally, acetylation at Lys-680 by KAT8/MOF promotes its dissociation from pRNA, affecting heterochromatin formation, nucleosome positioning and rDNA silencing. Deacetylation by SIRT1 in late S phase enhances pRNA-binding, allowing de novo DNA methylation and heterochromatin formation. Acetylation is high during S phase and declines to background levels in late S phase when the silent copies of rRNA genes are replicated. In terms of processing, ubiquitinated. Deubiquitinated by USP21 leading to its stabilization. Expressed at moderate levels in most tissues analyzed, including heart, brain, placenta, lung, skeletal muscle, kidney and pancreas.

It is found in the nucleus. The protein localises to the nucleolus. In terms of biological role, regulatory subunit of the ATP-dependent NoRC-1 and NoRC-5 ISWI chromatin remodeling complexes, which form ordered nucleosome arrays on chromatin and facilitate access to DNA during DNA-templated processes such as DNA replication, transcription, and repair. Both complexes regulate the spacing of nucleosomes along the chromatin and have the ability to slide mononucleosomes to the center of a DNA template. Directly stimulates the ATPase activity of SMARCA5 in the NoRC-5 ISWI chromatin remodeling complex. The NoRC-1 ISWI chromatin remodeling complex has a lower ATP hydrolysis rate than the NoRC-5 ISWI chromatin remodeling complex. Within the NoRC-5 ISWI chromatin remodeling complex, mediates silencing of a fraction of rDNA by recruiting histone-modifying enzymes and DNA methyltransferases, leading to heterochromatin formation and transcriptional silencing. In the complex, it plays a central role by being recruited to rDNA and by targeting chromatin modifying enzymes such as HDAC1, leading to repress RNA polymerase I transcription. Recruited to rDNA via its interaction with TTF1 and its ability to recognize and bind histone H4 acetylated on 'Lys-16' (H4K16ac), leading to deacetylation of H4K5ac, H4K8ac, H4K12ac but not H4K16ac. Specifically binds pRNAs, 150-250 nucleotide RNAs that are complementary in sequence to the rDNA promoter; pRNA-binding is required for heterochromatin formation and rDNA silencing. The chain is Bromodomain adjacent to zinc finger domain protein 2A (BAZ2A) from Homo sapiens (Human).